The primary structure comprises 503 residues: uncharacterized protein (503 aa).

A helical membrane pass occupies residues 26–46; it reads ILFLLLGLIILVNISINVATA. 4 disordered regions span residues 155–176, 311–381, 436–456, and 472–503; these read RPLSRGYPPFRKQPQGHKMSQM, YDAR…ESHE, QISDPTPPPTTFVPLSRNPGG, and VQENRGRASSLPPPSTSASRPSLHRSRTGKLN. 2 stretches are compositionally biased toward basic and acidic residues: residues 311–322 and 334–346; these read YDARDQWRRGTE and NPREVQGYRDHNS. Over residues 348-367 the composition is skewed to polar residues; it reads AHRQNFSSHTHSQPNHSPPQ. Positions 493-503 are enriched in basic residues; the sequence is SLHRSRTGKLN.

The protein resides in the membrane. This is an uncharacterized protein from Mus musculus (Mouse).